The following is a 355-amino-acid chain: Peptide chain release factor 1 (355 aa).

Q232 is modified (N5-methylglutamine).

Belongs to the prokaryotic/mitochondrial release factor family. In terms of processing, methylated by PrmC. Methylation increases the termination efficiency of RF1.

The protein localises to the cytoplasm. Its function is as follows. Peptide chain release factor 1 directs the termination of translation in response to the peptide chain termination codons UAG and UAA. This Kineococcus radiotolerans (strain ATCC BAA-149 / DSM 14245 / SRS30216) protein is Peptide chain release factor 1.